The following is a 530-amino-acid chain: UDP-glucuronosyltransferase 1A9 (530 aa).

A signal peptide spans 1-25; sequence MACTGWTSPLPLCVCLLLTCGFAEA. N-linked (GlcNAc...) asparagine glycosylation occurs at N71. K99 carries the post-translational modification N6-succinyllysine. N292 and N344 each carry an N-linked (GlcNAc...) asparagine glycan. The helical transmembrane segment at 488–504 threads the bilayer; the sequence is VIGFLLAVVLTVAFITF.

It belongs to the UDP-glycosyltransferase family. Homodimer. Homooligomer. Interacts with UGT1A1, UGT1A3, UGT1A4, UGT1A6, UGT1A7, UGT1A8 and UGT1A10 to form heterodimers. Isoform 1 interacts with isoform 2/i2 suggesting that oligomerization is involved in negative regulation of transferase activity by isoform 2. Isoform 1 also interacts with respective i2 isoforms of UGT1A1, UGT1A3, UGT1A4, UGT1A6, UGT1A7, UGT1A8 and UGT1A10. Expressed in liver, kidney, colon, esophagus and small intestine.

It is found in the endoplasmic reticulum membrane. It catalyses the reaction glucuronate acceptor + UDP-alpha-D-glucuronate = acceptor beta-D-glucuronoside + UDP + H(+). The catalysed reaction is 2-hydroxy-17beta-estradiol + UDP-alpha-D-glucuronate = 2-hydroxy-17beta-estradiol 3-O-(beta-D-glucuronate) + UDP + H(+). The enzyme catalyses 4-hydroxy-17beta-estradiol + UDP-alpha-D-glucuronate = 17beta-estradiol 4-O-(beta-D-glucuronate) + UDP + H(+). It carries out the reaction 2-hydroxyestrone + UDP-alpha-D-glucuronate = 2-hydroxyestrone 3-O-(beta-D-glucuronate) + UDP + H(+). It catalyses the reaction 4-hydroxyestrone + UDP-alpha-D-glucuronate = estrone 4-O-(beta-D-glucuronate) + UDP + H(+). The catalysed reaction is prunetin + UDP-alpha-D-glucuronate = prunetin-5-O-beta-D-glucuronide + UDP. The enzyme catalyses 8-iso-prostaglandin F2alpha + UDP-alpha-D-glucuronate = 8-iso-prostaglandin F2alpha-glucuronide + UDP + H(+). It carries out the reaction 5-epi-5-F2t-IsoP + UDP-alpha-D-glucuronate = 5-epi-5-F2t-IsoP-glucuronide + UDP + H(+). It catalyses the reaction (5Z,8Z,11Z,14Z)-eicosatetraenoate + UDP-alpha-D-glucuronate = O-[(5Z),(8Z),(11Z),(14Z)-eicosatetraenoyl]-beta-D-glucuronate + UDP. The catalysed reaction is 15-hydroxy-(5Z,8Z,11Z,13E)-eicosatetraenoate + UDP-alpha-D-glucuronate = 15-O-(beta-D-glucuronosyl)-(5Z,8Z,11Z,14Z)-eicosatetraenoate + UDP + H(+). The enzyme catalyses prostaglandin B1 + UDP-alpha-D-glucuronate = 15-O-(beta-D-glucuronosyl)-prostaglandin B1 + UDP + H(+). It carries out the reaction (E)-ferulate + UDP-alpha-D-glucuronate = (E)-4-O-(beta-D-glucuronosyl)-ferulate + UDP + H(+). It catalyses the reaction (E)-ferulate + UDP-alpha-D-glucuronate = (E)-ferulic acid beta-D-glucuronate ester + UDP. The catalysed reaction is candesartan + UDP-alpha-D-glucuronate = candesartan O-beta-D-glucuronoside + UDP. The enzyme catalyses SN-38 + UDP-alpha-D-glucuronate = SN-38 O-beta-D-glucuronide + UDP + H(+). It carries out the reaction mycophenolate + UDP-alpha-D-glucuronate = mycophenolate 7-O-beta-D-glucuronide + UDP + H(+). UDP-glucuronosyltransferase (UGT) that catalyzes phase II biotransformation reactions in which lipophilic substrates are conjugated with glucuronic acid to increase the metabolite's water solubility, thereby facilitating excretion into either the urine or bile. Essential for the elimination and detoxification of drugs, xenobiotics and endogenous compounds. Catalyzes the glucuronidation of endogenous estrogen hormones such as estradiol and estrone. Involved in the glucuronidation of arachidonic acid (AA) and AA-derived eicosanoids including 15-HETE, PGB1 and F2-isoprostanes (8-iso-PGF2alpha and 5-epi-5-F2t-IsoP). Glucuronates the phytochemical ferulic acid efficently at both the phenolic or the carboxylic acid group. Also catalyzes the glucuronidation of the isoflavones genistein, daidzein, glycitein, formononetin, biochanin A and prunetin, which are phytoestrogens with anticancer and cardiovascular properties. Involved in the glucuronidation of the AGTR1 angiotensin receptor antagonist caderastan, a drug which can inhibit the effect of angiotensin II. Involved in the biotransformation of 7-ethyl-10-hydroxycamptothecin (SN-38), the pharmacologically active metabolite of the anticancer drug irinotecan. Also metabolizes mycophenolate, an immunosuppressive agent. Functionally, lacks UGT glucuronidation activity but acts as a negative regulator of isoform 1. The protein is UDP-glucuronosyltransferase 1A9 of Homo sapiens (Human).